We begin with the raw amino-acid sequence, 371 residues long: Leu/Ile/Val-binding protein homolog 1 (371 aa).

The signal sequence occupies residues 1-23; it reads MRKTLFSGVALAAVIAFGGSAWA.

This sequence belongs to the leucine-binding protein family.

In terms of biological role, component of an amino-acid transport system. The sequence is that of Leu/Ile/Val-binding protein homolog 1 from Brucella suis biovar 1 (strain 1330).